Reading from the N-terminus, the 109-residue chain is Class I hydrophobin 7 (109 aa).

The signal sequence occupies residues 1-17 (MFAQSFIITALAALAVA). Disulfide bonds link Cys28-Cys88, Cys35-Cys82, Cys36-Cys69, and Cys89-Cys102.

The protein belongs to the fungal hydrophobin family. In terms of assembly, self-assembles to form functional amyloid fibrils called rodlets. Self-assembly into fibrillar rodlets occurs spontaneously at hydrophobic:hydrophilic interfaces and the rodlets further associate laterally to form amphipathic monolayers.

The protein localises to the secreted. It localises to the cell wall. Its function is as follows. Aerial growth, conidiation, and dispersal of filamentous fungi in the environment rely upon a capability of their secreting small amphipathic proteins called hydrophobins (HPBs) with low sequence identity. Class I can self-assemble into an outermost layer of rodlet bundles on aerial cell surfaces, conferring cellular hydrophobicity that supports fungal growth, development and dispersal; whereas Class II form highly ordered films at water-air interfaces through intermolecular interactions but contribute nothing to the rodlet structure. Hydph7 is a class I hydrophobin involved in fruiting body development. The sequence is that of Class I hydrophobin 7 from Pleurotus ostreatus (strain PC15) (Oyster mushroom).